Consider the following 110-residue polypeptide: MMETKATLRGVRLSAQKGRLVADQIRGKKVDQALNILQFSPKKGAAIIKRVLESAIANAEHNDGADIDELKVTTIYVEKGSVLKRFTARAKGRGDRISKQSCHIYVTVGN.

It belongs to the universal ribosomal protein uL22 family. Part of the 50S ribosomal subunit.

Its function is as follows. This protein binds specifically to 23S rRNA; its binding is stimulated by other ribosomal proteins, e.g. L4, L17, and L20. It is important during the early stages of 50S assembly. It makes multiple contacts with different domains of the 23S rRNA in the assembled 50S subunit and ribosome. In terms of biological role, the globular domain of the protein is located near the polypeptide exit tunnel on the outside of the subunit, while an extended beta-hairpin is found that lines the wall of the exit tunnel in the center of the 70S ribosome. This chain is Large ribosomal subunit protein uL22, found in Janthinobacterium sp. (strain Marseille) (Minibacterium massiliensis).